The following is a 255-amino-acid chain: Sushi domain-containing protein 3 (255 aa).

The interval 1–25 is disordered; sequence MRWAAATLRGKARPRGRAGVTTPAP. The Extracellular segment spans residues 1–103; the sequence is MRWAAATLRG…VPPHETFGFK (103 aa). Asparagine 27 is a glycosylation site (N-linked (GlcNAc...) asparagine). Residues 30–93 form the Sushi domain; it reads GTCAKLRLPP…WSSGSPVCKL (64 aa). Disulfide bonds link cysteine 32–cysteine 75 and cysteine 61–cysteine 91. Residues 104 to 124 form a helical membrane-spanning segment; it reads VAVIASIVSCAIILLMSMAFL. Topologically, residues 125-255 are cytoplasmic; that stretch reads TCCLLKCVKK…PQQPAAYALG (131 aa). The tract at residues 173 to 255 is disordered; sequence SGPSQAHDNH…PQQPAAYALG (83 aa). A compositionally biased stretch (basic and acidic residues) spans 179–191; the sequence is HDNHSFTTDHGES.

Highly expressed in estrogen receptor-positive breast tumors.

It localises to the cell membrane. Its function is as follows. May play a role in breast tumorigenesis by promoting estrogen-dependent cell proliferation, cell-cell interactions and migration. The chain is Sushi domain-containing protein 3 (SUSD3) from Homo sapiens (Human).